The primary structure comprises 837 residues: Neural cell adhesion molecule 2 (837 aa).

The N-terminal stretch at Met1–Ala19 is a signal peptide. Topologically, residues Leu20 to Asn697 are extracellular. 5 Ig-like C2-type domains span residues Leu21–Val108, Gln113–Ile202, Pro208–Gln297, Pro302–Asp396, and Pro401–Ala491. 2 cysteine pairs are disulfide-bonded: Cys42–Cys93 and Cys136–Cys186. N-linked (GlcNAc...) asparagine glycosylation is found at Asn177 and Asn219. A disulfide bridge links Cys232 with Cys281. An N-linked (GlcNAc...) asparagine glycan is attached at Asn309. Residues Cys322 and Cys380 are joined by a disulfide bond. 5 N-linked (GlcNAc...) asparagine glycosylation sites follow: Asn406, Asn419, Asn445, Asn474, and Asn562. Cys422 and Cys475 are oxidised to a cystine. Fibronectin type-III domains lie at Ser498 to Val591 and Glu593 to Pro688. A helical membrane pass occupies residues Gly698–Val718. Over Thr719 to Ala837 the chain is Cytoplasmic. Residues Gly764–Gly785 are compositionally biased toward basic and acidic residues. The interval Gly764–Thr818 is disordered. Ser765 bears the Phosphoserine mark. Position 780 is a phosphothreonine (Thr780). Phosphoserine is present on Ser786. A compositionally biased stretch (low complexity) spans Asn789–Thr798. The segment covering Glu799–Leu814 has biased composition (basic and acidic residues).

In terms of tissue distribution, expressed most strongly in adult and fetal brain.

It is found in the cell membrane. May play important roles in selective fasciculation and zone-to-zone projection of the primary olfactory axons. The sequence is that of Neural cell adhesion molecule 2 (NCAM2) from Homo sapiens (Human).